The chain runs to 188 residues: dCTP deaminase (188 aa).

DCTP-binding positions include Lys111 to Arg116, Thr135 to Glu137, Gln156, Tyr170, and Gln180. Residue Glu137 is the Proton donor/acceptor of the active site.

This sequence belongs to the dCTP deaminase family. Homotrimer.

The enzyme catalyses dCTP + H2O + H(+) = dUTP + NH4(+). It participates in pyrimidine metabolism; dUMP biosynthesis; dUMP from dCTP (dUTP route): step 1/2. Its function is as follows. Catalyzes the deamination of dCTP to dUTP. The protein is dCTP deaminase of Pseudomonas aeruginosa (strain UCBPP-PA14).